We begin with the raw amino-acid sequence, 525 residues long: Arylsulfatase G (525 aa).

Residues 1 to 16 (MGWLFLKVLLAGVSFS) form the signal peptide. Ca(2+) is bound by residues D44, D45, and C84. C84 serves as the catalytic Nucleophile. The residue at position 84 (C84) is a 3-oxoalanine (Cys). Residue N117 is glycosylated (N-linked (GlcNAc...) asparagine). K137 provides a ligand contact to substrate. H139 is an active-site residue. Residue S162 coordinates substrate. A glycan (N-linked (GlcNAc...) asparagine) is linked at N215. H251 serves as a coordination point for substrate. The Ca(2+) site is built by D302 and N303. N-linked (GlcNAc...) asparagine glycans are attached at residues N356 and N497.

Belongs to the sulfatase family. Ca(2+) is required as a cofactor. In terms of processing, N-glycosylated. N-glycosylated with both high mannose and complex type sugars. Post-translationally, the conversion to 3-oxoalanine (also known as C-formylglycine, FGly), of a serine or cysteine residue in prokaryotes and of a cysteine residue in eukaryotes, is critical for catalytic activity. The 63-kDa precursor undergoes proteolytic processing in two steps, yielding two fragments in the first step (apparent molecular masses of 44 and 18 kDa). In the second step, the 44-kDa fragment is processed further to the 34- and 10-kDa chains. The 10-kDa chain is a cleavage product of the 44-kDa fragment but linked to the 18-kDa chain through a disulfide bridge. In terms of tissue distribution, widely expressed, with very low expression in brain, lung, heart and skeletal muscle.

It localises to the lysosome. It catalyses the reaction an aryl sulfate + H2O = a phenol + sulfate + H(+). The catalysed reaction is Hydrolysis of the 3-sulfate groups of the N-sulfo-D-glucosamine 3-O-sulfate units of heparin.. Its activity is regulated as follows. Inhibited by phosphate. The phosphate forms a covalent bond with the active site 3-oxoalanine. Functionally, displays arylsulfatase activity at acidic pH towards artificial substrates, such as p-nitrocatechol sulfate and also, but with a lower activity towards p-nitrophenyl sulfate and 4-methylumbelliferyl sulfate. Catalyzes the hydrolysis of the 3-sulfate groups of the N-sulfo-D-glucosamine 3-O-sulfate units of heparin. In Homo sapiens (Human), this protein is Arylsulfatase G (ARSG).